The primary structure comprises 353 residues: Phospho-N-acetylmuramoyl-pentapeptide-transferase (353 aa).

The next 10 helical transmembrane spans lie at 24-44 (LGFFIAFFLTLFLMPKFILWA), 66-86 (TPTMGGIVFVFATIVASVLCA), 88-108 (LSNLYVLLGIIVLVGFSFVGF), 129-149 (FGMLFILSLIVSVLLSLKGLD), 160-180 (PLFEMPTMLAVGFWVLVFLST), 192-212 (GLASVPSIFTLLSLSIFVYVA), 229-249 (VGELFVISLALVGSLFGFLWY), 256-276 (VFMGDSGSLAIGGFIAYNAIV), 281-301 (ILLVLMGSIFVIETLSVILQV), and 330-350 (KVIVRFWIISMLSNLVALLSL).

Belongs to the glycosyltransferase 4 family. MraY subfamily. Mg(2+) serves as cofactor.

Its subcellular location is the cell inner membrane. It carries out the reaction UDP-N-acetyl-alpha-D-muramoyl-L-alanyl-gamma-D-glutamyl-meso-2,6-diaminopimeloyl-D-alanyl-D-alanine + di-trans,octa-cis-undecaprenyl phosphate = di-trans,octa-cis-undecaprenyl diphospho-N-acetyl-alpha-D-muramoyl-L-alanyl-D-glutamyl-meso-2,6-diaminopimeloyl-D-alanyl-D-alanine + UMP. It participates in cell wall biogenesis; peptidoglycan biosynthesis. Functionally, catalyzes the initial step of the lipid cycle reactions in the biosynthesis of the cell wall peptidoglycan: transfers peptidoglycan precursor phospho-MurNAc-pentapeptide from UDP-MurNAc-pentapeptide onto the lipid carrier undecaprenyl phosphate, yielding undecaprenyl-pyrophosphoryl-MurNAc-pentapeptide, known as lipid I. In Helicobacter pylori (strain J99 / ATCC 700824) (Campylobacter pylori J99), this protein is Phospho-N-acetylmuramoyl-pentapeptide-transferase.